A 144-amino-acid chain; its full sequence is Large ribosomal subunit protein uL13 (144 aa).

Belongs to the universal ribosomal protein uL13 family. Part of the 50S ribosomal subunit.

In terms of biological role, this protein is one of the early assembly proteins of the 50S ribosomal subunit, although it is not seen to bind rRNA by itself. It is important during the early stages of 50S assembly. This is Large ribosomal subunit protein uL13 from Blochmanniella pennsylvanica (strain BPEN).